We begin with the raw amino-acid sequence, 355 residues long: MKTYKIALIKGDGIGPEIIDEAVKVLDAVASCCDLEFSYEEALMGGCAYDITGDPLPQETINISLNSDAVLFGAIGGAKWDNLPREKRPESGLLRFRKELGVYANLRPANVFDELINASSLKAEVIKGVDLMVVRELIGGIYFGEPKGRDENRGWNTMVYTREEIVRIAHQAFKIAMSRSKRVCSIDKANVLDVSQLWREVVIEVAKEYPEVELTHMYVDNAAMQLIRDPRQFDVMLTGNIFGDILSDEASMLSGSIGLLPSASVGAKIGVYEPIHGSAPDIAGQGIANPIATILSASMMLRYALGEHGAADKIDAAVKRALKEGYRTKDLAQYDAKEVCSTSEMGSIIANYAAK.

Residue 77–90 coordinates NAD(+); the sequence is GAKWDNLPREKRPE. Residues Arg97, Arg107, Arg135, and Asp220 each coordinate substrate. Mg(2+)-binding residues include Asp220, Asp244, and Asp248. NAD(+) is bound at residue 277 to 289; that stretch reads GSAPDIAGQGIAN.

The protein belongs to the isocitrate and isopropylmalate dehydrogenases family. LeuB type 1 subfamily. As to quaternary structure, homodimer. Requires Mg(2+) as cofactor. The cofactor is Mn(2+).

Its subcellular location is the cytoplasm. The catalysed reaction is (2R,3S)-3-isopropylmalate + NAD(+) = 4-methyl-2-oxopentanoate + CO2 + NADH. It functions in the pathway amino-acid biosynthesis; L-leucine biosynthesis; L-leucine from 3-methyl-2-oxobutanoate: step 3/4. Its function is as follows. Catalyzes the oxidation of 3-carboxy-2-hydroxy-4-methylpentanoate (3-isopropylmalate) to 3-carboxy-4-methyl-2-oxopentanoate. The product decarboxylates to 4-methyl-2 oxopentanoate. The chain is 3-isopropylmalate dehydrogenase from Sulfurimonas denitrificans (strain ATCC 33889 / DSM 1251) (Thiomicrospira denitrificans (strain ATCC 33889 / DSM 1251)).